We begin with the raw amino-acid sequence, 508 residues long: Chromosomal replication initiator protein DnaA (508 aa).

The interval 1–90 (MSVELWQQCV…RRSSAPRAAP (90 aa)) is domain I, interacts with DnaA modulators. Residues 91-171 (NAPVSAAVAA…QVEGALKHTS (81 aa)) are domain II. Residues 130–160 (EVEEPSSRDSFDSMSDSGSVPAASGRTEQRT) form a disordered region. Residues 172 to 388 (YLNRTFTFET…GALKRVIAHS (217 aa)) form a domain III, AAA+ region region. ATP contacts are provided by glycine 216, glycine 218, lysine 219, and threonine 220. A domain IV, binds dsDNA region spans residues 389–508 (HFMGRDITIE…YKNLLRTLTT (120 aa)).

This sequence belongs to the DnaA family. In terms of assembly, oligomerizes as a right-handed, spiral filament on DNA at oriC.

The protein resides in the cytoplasm. Its function is as follows. Plays an essential role in the initiation and regulation of chromosomal replication. ATP-DnaA binds to the origin of replication (oriC) to initiate formation of the DNA replication initiation complex once per cell cycle. Binds the DnaA box (a 9 base pair repeat at the origin) and separates the double-stranded (ds)DNA. Forms a right-handed helical filament on oriC DNA; dsDNA binds to the exterior of the filament while single-stranded (ss)DNA is stabiized in the filament's interior. The ATP-DnaA-oriC complex binds and stabilizes one strand of the AT-rich DNA unwinding element (DUE), permitting loading of DNA polymerase. After initiation quickly degrades to an ADP-DnaA complex that is not apt for DNA replication. Binds acidic phospholipids. This chain is Chromosomal replication initiator protein DnaA, found in Pseudomonas entomophila (strain L48).